The primary structure comprises 78 residues: Mitotic-spindle organizing protein 1 (78 aa).

N-acetylalanine is present on Ala2.

Belongs to the MOZART1 family. In terms of assembly, associates with the gamma-tubulin ring complex (gTuRC) consisting of TUBGCP2, TUBGCP3, TUBGCP4, TUBGCP5 and TUBGCP6 and gamma-tubulin TUBG1 or TUBG2; within the complex, interacts with TUBGCP3 and TUBGCP6 to form a luminal bridge with actin that stabilizes the initial structure during complex assembly. Interacts with TUBG1.

The protein localises to the cytoplasm. The protein resides in the cytoskeleton. It is found in the microtubule organizing center. It localises to the centrosome. Its subcellular location is the spindle. Required for the recruitment and the assembly of the gamma-tubulin ring complex (gTuRC) at the centrosome. The gTuRC regulates the minus-end nucleation of alpha-beta tubulin heterodimers that grow into microtubule protafilaments, a critical step in centrosome duplication and spindle formation. This chain is Mitotic-spindle organizing protein 1 (Mzt1), found in Mus musculus (Mouse).